The primary structure comprises 175 residues: Mitochondrial inner membrane protease subunit 2 (175 aa).

The helical transmembrane segment at 19–37 (FFVAVPVAVTFLDRVACVA) threads the bilayer. Residues serine 43 and lysine 91 contribute to the active site.

It belongs to the peptidase S26 family. IMP2 subfamily. As to quaternary structure, heterodimer of 2 subunits, IMMPL1 and IMMPL2.

It is found in the mitochondrion inner membrane. Functionally, catalyzes the removal of transit peptides required for the targeting of proteins from the mitochondrial matrix, across the inner membrane, into the inter-membrane space. Known to process the nuclear encoded protein DIABLO. The protein is Mitochondrial inner membrane protease subunit 2 (Immp2l) of Mus musculus (Mouse).